Reading from the N-terminus, the 62-residue chain is MDHSVLNVLVCPICKANLYYDKENQVLVCKADKLAYPIRENIPVMLVEEAKKMTLEEVKKYG.

The protein belongs to the UPF0434 family.

The sequence is that of UPF0434 protein FTL_1400 from Francisella tularensis subsp. holarctica (strain LVS).